Here is a 498-residue protein sequence, read N- to C-terminus: Putative BTB/POZ domain-containing protein L67 (498 aa).

In terms of domain architecture, BTB spans 26 to 96 (SDINITLSDN…MYGISLSEIN (71 aa)).

The protein belongs to the mimivirus BTB/WD family.

This chain is Putative BTB/POZ domain-containing protein L67, found in Acanthamoeba polyphaga (Amoeba).